The primary structure comprises 170 residues: Translationally-controlled tumor protein homolog (170 aa).

Positions 1–170 constitute a TCTP domain; it reads MIIYKDLLSG…FKDGLEIEKC (170 aa).

The protein belongs to the TCTP family.

The protein resides in the cytoplasm. In terms of biological role, involved in calcium binding and microtubule stabilization. In Scophthalmus maximus (Turbot), this protein is Translationally-controlled tumor protein homolog (tpt1).